The following is a 259-amino-acid chain: UPF0246 protein PSPPH_1119 (259 aa).

Belongs to the UPF0246 family.

The protein is UPF0246 protein PSPPH_1119 of Pseudomonas savastanoi pv. phaseolicola (strain 1448A / Race 6) (Pseudomonas syringae pv. phaseolicola (strain 1448A / Race 6)).